The sequence spans 146 residues: 3-hydroxyacyl-[acyl-carrier-protein] dehydratase FabZ (146 aa).

H47 is a catalytic residue.

The protein belongs to the thioester dehydratase family. FabZ subfamily.

It localises to the cytoplasm. The catalysed reaction is a (3R)-hydroxyacyl-[ACP] = a (2E)-enoyl-[ACP] + H2O. Functionally, involved in unsaturated fatty acids biosynthesis. Catalyzes the dehydration of short chain beta-hydroxyacyl-ACPs and long chain saturated and unsaturated beta-hydroxyacyl-ACPs. The protein is 3-hydroxyacyl-[acyl-carrier-protein] dehydratase FabZ of Nitrosospira multiformis (strain ATCC 25196 / NCIMB 11849 / C 71).